The chain runs to 368 residues: tRNA-specific 2-thiouridylase MnmA (368 aa).

ATP is bound by residues 12–19 and methionine 38; that span reads GMSGGVDS. The interaction with target base in tRNA stretch occupies residues 98–100; sequence NPD. Residue cysteine 103 is the Nucleophile of the active site. The cysteines at positions 103 and 200 are disulfide-linked. Glycine 128 provides a ligand contact to ATP. The segment at 150-152 is interaction with tRNA; that stretch reads KDQ. Cysteine 200 functions as the Cysteine persulfide intermediate in the catalytic mechanism. The interaction with tRNA stretch occupies residues 311–312; sequence RY.

Belongs to the MnmA/TRMU family.

Its subcellular location is the cytoplasm. It catalyses the reaction S-sulfanyl-L-cysteinyl-[protein] + uridine(34) in tRNA + AH2 + ATP = 2-thiouridine(34) in tRNA + L-cysteinyl-[protein] + A + AMP + diphosphate + H(+). Functionally, catalyzes the 2-thiolation of uridine at the wobble position (U34) of tRNA, leading to the formation of s(2)U34. In Aeromonas hydrophila subsp. hydrophila (strain ATCC 7966 / DSM 30187 / BCRC 13018 / CCUG 14551 / JCM 1027 / KCTC 2358 / NCIMB 9240 / NCTC 8049), this protein is tRNA-specific 2-thiouridylase MnmA.